Reading from the N-terminus, the 195-residue chain is Der GTPase-activating protein YihI (195 aa).

The disordered stretch occupies residues 1-81 (MSRTKKTRRI…KAVVKEVKDP (81 aa)). 3 stretches are compositionally biased toward basic and acidic residues: residues 9 to 23 (RITD…DKPK), 38 to 49 (TRYELDAQAREE), and 66 to 81 (DPAE…VKDP).

Belongs to the YihI family. In terms of assembly, interacts with Der.

A GTPase-activating protein (GAP) that modifies Der/EngA GTPase function. May play a role in ribosome biogenesis. The polypeptide is Der GTPase-activating protein YihI (Mannheimia haemolytica (Pasteurella haemolytica)).